Reading from the N-terminus, the 1896-residue chain is Plexin-A1 (1896 aa).

Residues 1 to 26 (MPLPPRSLQVLLLLLLLLLLLPGMWA) form the signal peptide. The region spanning 27–512 (EAGLPRAGGG…TEKQVTRVPV (486 aa)) is the Sema domain. At 27–1244 (EAGLPRAGGG…VYSDSLLTLP (1218 aa)) the chain is on the extracellular side. N-linked (GlcNAc...) asparagine glycosylation occurs at Asn77. Cystine bridges form between Cys95–Cys104, Cys130–Cys138, Cys286–Cys407, Cys302–Cys358, Cys376–Cys395, Cys515–Cys532, Cys521–Cys563, Cys524–Cys541, Cys535–Cys547, and Cys598–Cys617. N-linked (GlcNAc...) asparagine glycosylation is found at Asn660, Asn672, and Asn701. 4 IPT/TIG domains span residues 864–959 (PKIL…FTFV), 961–1045 (PTFY…YNYT), 1048–1147 (PTIL…FLYY), and 1150–1236 (PVLE…LQVY). Asn1043 carries an N-linked (GlcNAc...) asparagine glycan. N-linked (GlcNAc...) asparagine glycosylation is found at Asn1187 and Asn1212. Residues 1245-1265 (AIVGIGGGGGLLLLVIVAVLI) form a helical membrane-spanning segment. Residues 1264–1317 (LIAYKRKSRDADRTLKRLQLQMDNLESRVALECKEAFAELQTDIHELTNDLDGA) adopt a coiled-coil conformation. At 1266–1896 (AYKRKSRDAD…QVVDTMALSS (631 aa)) the chain is on the cytoplasmic side.

It belongs to the plexin family. In terms of assembly, interacts directly with NRP1 and NRP2. Interacts with PLXN1B. Interacts with FARP2, RND1 and KDR/VEGFR2. Binding of SEMA3A leads to dissociation of FARP2. Interacts with CRMP1, DPYSL2/CRMP2, DPYSL3/CRMP3 and DPYSL4/CRMP4. Interacts (via TIG domains) with TREM2; the interaction mediates SEMA6D binding and signaling through TYROBP. Detected in fetal brain, lung, liver and kidney.

It is found in the cell membrane. Its function is as follows. Coreceptor for SEMA3A, SEMA3C, SEMA3F and SEMA6D. Necessary for signaling by class 3 semaphorins and subsequent remodeling of the cytoskeleton. Plays a role in axon guidance, invasive growth and cell migration. Class 3 semaphorins bind to a complex composed of a neuropilin and a plexin. The plexin modulates the affinity of the complex for specific semaphorins, and its cytoplasmic domain is required for the activation of down-stream signaling events in the cytoplasm. Acts as coreceptor of TREM2 for SEMA6D in dendritic cells and is involved in the generation of immune responses and skeletal homeostasis. The sequence is that of Plexin-A1 from Homo sapiens (Human).